The sequence spans 218 residues: Adenylate kinase (218 aa).

Position 10 to 15 (10 to 15) interacts with ATP; the sequence is GAGKGT. Residues 30–59 are NMP; that stretch reads STGDMLRAAVKEETPLGRKAKEVMDSGNLV. Residues Thr31, Arg36, 57 to 59, 85 to 88, and Gln92 contribute to the AMP site; these read NLV and GFPR. The tract at residues 122-159 is LID; it reads GRRVHPASGRTYHLTFNPPQQQGVDDETGEPLIQRVDD. ATP is bound by residues Arg123 and 132-133; that span reads TY. 2 residues coordinate AMP: Arg156 and Arg167. Residue Gly203 participates in ATP binding.

Belongs to the adenylate kinase family. In terms of assembly, monomer.

It localises to the cytoplasm. The enzyme catalyses AMP + ATP = 2 ADP. Its pathway is purine metabolism; AMP biosynthesis via salvage pathway; AMP from ADP: step 1/1. Functionally, catalyzes the reversible transfer of the terminal phosphate group between ATP and AMP. Plays an important role in cellular energy homeostasis and in adenine nucleotide metabolism. The chain is Adenylate kinase from Chlorobium phaeovibrioides (strain DSM 265 / 1930) (Prosthecochloris vibrioformis (strain DSM 265)).